A 202-amino-acid chain; its full sequence is Small ribosomal subunit protein uS4c (202 aa).

An S4 RNA-binding domain is found at 90–150 (MRLDNVIFRL…NQRKSQAIIN (61 aa)).

The protein belongs to the universal ribosomal protein uS4 family. As to quaternary structure, part of the 30S ribosomal subunit. Contacts protein S5. The interaction surface between S4 and S5 is involved in control of translational fidelity.

The protein resides in the plastid. It is found in the chloroplast. One of the primary rRNA binding proteins, it binds directly to 16S rRNA where it nucleates assembly of the body of the 30S subunit. Functionally, with S5 and S12 plays an important role in translational accuracy. In Canalohypopterygium tamariscinum (Moss), this protein is Small ribosomal subunit protein uS4c (rps4).